The sequence spans 310 residues: Protein DOS2 (310 aa).

2 stretches are compositionally biased toward basic and acidic residues: residues 15–26 (DKISNSHTKETG) and 135–146 (SNDKDENSKENE). 2 disordered regions span residues 15 to 45 (DKIS…KTNE) and 131 to 151 (AEND…AVGG). Residues 176 to 228 (QLDPFDVDEKTEEICSILQGDKDISKLMNDIVPHKISYKDFWHIYFLQRNKIL) form the BSD domain. Residues 240–310 (KKEKETEEKE…KDDDDDDDWE (71 aa)) are disordered. Positions 247-263 (EKEVEWDDEEEEEDDDK) are enriched in acidic residues. Basic and acidic residues-rich tracts occupy residues 264 to 276 (VEAV…KGET) and 284 to 300 (GLKD…KDES). Residues 301–310 (KDDDDDDDWE) show a composition bias toward acidic residues.

Acts in ubiquitin metabolism and is necessary for the control of single-copy DNA replication. This chain is Protein DOS2 (DOS2), found in Saccharomyces cerevisiae (strain ATCC 204508 / S288c) (Baker's yeast).